Here is a 222-residue protein sequence, read N- to C-terminus: Uracil-DNA glycosylase (222 aa).

The active-site Proton acceptor is the Asp-66.

The protein belongs to the uracil-DNA glycosylase (UDG) superfamily. UNG family.

The protein localises to the cytoplasm. It carries out the reaction Hydrolyzes single-stranded DNA or mismatched double-stranded DNA and polynucleotides, releasing free uracil.. Functionally, excises uracil residues from the DNA which can arise as a result of misincorporation of dUMP residues by DNA polymerase or due to deamination of cytosine. This is Uracil-DNA glycosylase from Porphyromonas gingivalis (strain ATCC 33277 / DSM 20709 / CIP 103683 / JCM 12257 / NCTC 11834 / 2561).